The chain runs to 727 residues: Ankyrin repeat domain-containing protein 6 (727 aa).

ANK repeat units lie at residues 9 to 38 (ALSE…RVAV), 41 to 70 (HGRT…DLDV), 74 to 103 (GDQT…ALDR), 107 to 136 (DGNT…NVLA), 140 to 169 (AGNT…RADL), 173 to 202 (AGDT…SVHE), 206 to 235 (AGDT…DTTI), and 239 to 268 (AGQT…VLRF). Residues 277–386 (KRERLKEERR…HRCSSPPPPH (110 aa)) form a disordered region. Residues 280 to 296 (RLKEERRAQSVPRDEVA) are compositionally biased toward basic and acidic residues. Positions 298-312 (SKGSVSAGDTPSSEQ) are enriched in polar residues. The segment covering 314-324 (VARKEEAREEF) has biased composition (basic and acidic residues). The span at 363 to 379 (KNLHAHNHPKKRNRHRC) shows a compositional bias: basic residues. Residues 417-446 (LINKLENQLEATVEEIKAELGSVQDKMNTK) adopt a coiled-coil conformation. Residues 548-557 (PAAASDSSPP) show a composition bias toward low complexity. Disordered regions lie at residues 548–586 (PAAA…CTGS) and 601–657 (NEAA…TGPH). Residues 566 to 584 (LNSTATQRLQQELSSSDCT) show a composition bias toward polar residues. Over residues 622–633 (KSGKSGPTRHRA) the composition is skewed to basic residues. Positions 682–727 (WYERKIEEARSQANQKAQQDKATLKEHIKSLEEELAKLRTRVQKEN) form a coiled coil.

As to quaternary structure, interacts with AXN1, AXN2 and CSNK1E/CKI-epsilon.

Functionally, recruits CKI-epsilon to the beta-catenin degradation complex that consists of AXN1 or AXN2 and GSK3-beta and allows efficient phosphorylation of beta-catenin, thereby inhibiting beta-catenin/Tcf signals. This Homo sapiens (Human) protein is Ankyrin repeat domain-containing protein 6 (ANKRD6).